We begin with the raw amino-acid sequence, 412 residues long: Kelch repeat-containing protein At1g19470 (412 aa).

Positions 1–55 (MVNISEIPDDSNDGCDPNKKPEEQVLRRSRRIATRNENQNKKPKEEEEEDNRSVS) are disordered. Basic and acidic residues predominate over residues 16-26 (DPNKKPEEQVL). 4 Kelch repeats span residues 156–202 (EMYV…VVDG), 203–250 (KIYV…SAHA), 255–291 (KLYM…WDKT), and 292–345 (CCVV…EMAN).

The polypeptide is Kelch repeat-containing protein At1g19470 (Arabidopsis thaliana (Mouse-ear cress)).